The following is a 208-amino-acid chain: MYEYKFDVRVGSKIINCRAFTLKEYLELITAKNNGSVEVIVKKLIKDCTNAKDLNRQESELLLIHLWAHSLGEVNHENSWKCTCGTEIPTHINLLHTQIDAPEDLWYTLGDIKIKFRYPKIFDDKNIAHMIVSCIETIHANGESIPVEDLNEKELEDLYSIITESDIVAIKDMLLKPTVYLAVPIKCPECGKTHAHVIRGLKEFFELL.

The propeptide occupies 1–5 (MYEYK).

It is found in the virion. Baseplate hub assembly chaperone involved in the tail assembly. The protein is Baseplate hub assembly protein gp26 (26) of Escherichia coli (Bacteriophage T4).